A 65-amino-acid polypeptide reads, in one-letter code: DNA-directed RNA polymerase subunit omega (65 aa).

This sequence belongs to the RNA polymerase subunit omega family. In terms of assembly, the RNAP catalytic core consists of 2 alpha, 1 beta, 1 beta' and 1 omega subunit. When a sigma factor is associated with the core the holoenzyme is formed, which can initiate transcription.

It carries out the reaction RNA(n) + a ribonucleoside 5'-triphosphate = RNA(n+1) + diphosphate. In terms of biological role, promotes RNA polymerase assembly. Latches the N- and C-terminal regions of the beta' subunit thereby facilitating its interaction with the beta and alpha subunits. In Finegoldia magna (strain ATCC 29328 / DSM 20472 / WAL 2508) (Peptostreptococcus magnus), this protein is DNA-directed RNA polymerase subunit omega.